Here is an 858-residue protein sequence, read N- to C-terminus: RNA-directed RNA polymerase 2a (858 aa).

In terms of domain architecture, RdRp catalytic spans 511 to 624 (KHCFEIDLSK…FSVLPPVGDP (114 aa)). A compositionally biased stretch (basic and acidic residues) spans 772–785 (TKQREKKDGIERRR). A disordered region spans residues 772–830 (TKQREKKDGIERRRNDKRRTPTGSYGGGEEAETKVSQAESTGTRSQKSQREGAFKSQAV). Positions 805–817 (KVSQAESTGTRSQ) are enriched in polar residues.

It belongs to the ssRNA positive-strand viruses RNA-directed RNA polymerase family. As to quaternary structure, interacts with replication protein 1a.

It carries out the reaction RNA(n) + a ribonucleoside 5'-triphosphate = RNA(n+1) + diphosphate. Functionally, RNA-dependent RNA polymerase which replicates the viral genome composed of 3 RNA segments, RNA1, RNA2 and RNA3. The sequence is that of RNA-directed RNA polymerase 2a from Cucumber mosaic virus (strain As) (CMV).